Here is a 278-residue protein sequence, read N- to C-terminus: UPF0276 protein Ssed_2857 (278 aa).

Belongs to the UPF0276 family.

This Shewanella sediminis (strain HAW-EB3) protein is UPF0276 protein Ssed_2857.